The chain runs to 224 residues: 7-cyano-7-deazaguanine synthase (224 aa).

12-22 (LSGGLDSSTVT) serves as a coordination point for ATP. Zn(2+)-binding residues include Cys-193, Cys-201, Cys-204, and Cys-207.

It belongs to the QueC family. Requires Zn(2+) as cofactor.

It carries out the reaction 7-carboxy-7-deazaguanine + NH4(+) + ATP = 7-cyano-7-deazaguanine + ADP + phosphate + H2O + H(+). It participates in purine metabolism; 7-cyano-7-deazaguanine biosynthesis. Its function is as follows. Catalyzes the ATP-dependent conversion of 7-carboxy-7-deazaguanine (CDG) to 7-cyano-7-deazaguanine (preQ(0)). In Prochlorococcus marinus (strain MIT 9515), this protein is 7-cyano-7-deazaguanine synthase.